Consider the following 878-residue polypeptide: Leucine--tRNA ligase (878 aa).

The short motif at 43–54 is the 'HIGH' region element; sequence PYPSAQGLHVGH. Positions 634-638 match the 'KMSKS' region motif; sequence KMSKA. Residue Lys-637 coordinates ATP.

The protein belongs to the class-I aminoacyl-tRNA synthetase family.

It is found in the cytoplasm. It carries out the reaction tRNA(Leu) + L-leucine + ATP = L-leucyl-tRNA(Leu) + AMP + diphosphate. The protein is Leucine--tRNA ligase of Treponema pallidum subsp. pallidum (strain SS14).